Reading from the N-terminus, the 504-residue chain is D-alanine--D-alanyl carrier protein ligase (504 aa).

Thr152 to Ser153 contacts ATP. Asp197 contributes to the D-alanine binding site. Asn292–Thr297 is a binding site for ATP. Residue Val301 coordinates D-alanine. Residues Asp383, Tyr394–Arg397, and Lys492 contribute to the ATP site. Lys492 is a D-alanine binding site.

This sequence belongs to the ATP-dependent AMP-binding enzyme family. DltA subfamily.

It localises to the cytoplasm. It catalyses the reaction holo-[D-alanyl-carrier protein] + D-alanine + ATP = D-alanyl-[D-alanyl-carrier protein] + AMP + diphosphate. Its pathway is cell wall biogenesis; lipoteichoic acid biosynthesis. Catalyzes the first step in the D-alanylation of lipoteichoic acid (LTA), the activation of D-alanine and its transfer onto the D-alanyl carrier protein (Dcp) DltC. In an ATP-dependent two-step reaction, forms a high energy D-alanyl-AMP intermediate, followed by transfer of the D-alanyl residue as a thiol ester to the phosphopantheinyl prosthetic group of the Dcp. D-alanylation of LTA plays an important role in modulating the properties of the cell wall in Gram-positive bacteria, influencing the net charge of the cell wall. This Bacillus cereus (strain AH187) protein is D-alanine--D-alanyl carrier protein ligase.